A 488-amino-acid polypeptide reads, in one-letter code: Proline--tRNA ligase (488 aa).

Belongs to the class-II aminoacyl-tRNA synthetase family. ProS type 3 subfamily. As to quaternary structure, homodimer.

The protein localises to the cytoplasm. The enzyme catalyses tRNA(Pro) + L-proline + ATP = L-prolyl-tRNA(Pro) + AMP + diphosphate. In terms of biological role, catalyzes the attachment of proline to tRNA(Pro) in a two-step reaction: proline is first activated by ATP to form Pro-AMP and then transferred to the acceptor end of tRNA(Pro). This is Proline--tRNA ligase from Borreliella burgdorferi (strain ZS7) (Borrelia burgdorferi).